The sequence spans 501 residues: TNF receptor-associated factor 2 (501 aa).

Ala2 is subject to N-acetylalanine. Ser5 bears the Phosphoserine mark. Thr7 is modified (phosphothreonine). Phosphoserine is present on Ser11. Thr22 is modified (phosphothreonine). Residue Lys31 forms a Glycyl lysine isopeptide (Lys-Gly) (interchain with G-Cter in ubiquitin) linkage. Residues 34 to 73 (CSACRNVLRRPFQAQCGHRYCSFCLASILSSGPQNCAACV) form an RING-type zinc finger. Residue Thr117 is modified to Phosphothreonine; by PKC. TRAF-type zinc fingers lie at residues 124-180 (CHEG…AHHE) and 177-233 (AHHE…EKQQ). Residues 283–293 (ENIVCVLNREV) are important for interaction with BIRC2 and BIRC3. The stretch at 299 to 348 (TAEACSRQHRLDQDKIEALSSKVQQLERSIGLKDLAMADLEQKVLEMEAS) forms a coiled coil. A Glycyl lysine isopeptide (Lys-Gly) (interchain with G-Cter in ubiquitin) cross-link involves residue Lys320. An MATH domain is found at 351 to 496 (DGVFIWKISD…DDAIFIKAIV (146 aa)).

This sequence belongs to the TNF receptor-associated factor family. A subfamily. As to quaternary structure, homotrimer. Heterotrimer with TRAF1. Heterotrimer with TRAF3 (via TRAF domain). The domain containing the RING-type and the first TRAF-type zinc finger can also form homodimers (in vitro). Interacts with TNFRSF1B/TNFR2. Interacts with TNFRSF5/CD40. Interacts with TNFRSF4, TNFRSF7/CD27, TNFRSF8/CD30, TNFRSF9/CD137, TNFRSF11A/RANK, TNFRSF13B/TACI, TNFRSF14, TNFRSF16/NGFR, TNFRSF17/BCMA, TNFRSF18/AITR, TNFRSF19/TROY, TNFRSF19L/RELT and EDAR. Stimulation of TNF-alpha receptor TNFRSF1A leads to the formation of two distinct signaling complexes. Plasma membrane-bound complex I is composed of TNFRSF1A, TRADD, RIPK1, TRAF2 and BIRC2/c-IAP1 or BIRC3 which interacts with CHUCK/IKK-alpha, IKBKB/IKK-beta and IKBKG/IKK-gamma promoting cell survival. Subsequently, TRADD, RIPK1 and TRAF2 dissociate from TNFRSF1A and form cytoplasmic complex II with FADD and caspase CASP8 promoting cell apoptosis. Interacts with TRADD. Identified in a complex with TNFRSF1A, RIPK1 and IKBKB/IKK-beta. Interacts with RIPK2. Interacts with BIRC2 and BIRC3 N-terminus; a single BIRC2 or BIRC3 molecule interacts with a heterotrimer formed by TRAF1 and TRAF2, or a TRAF2 homotrimer. Identified in a complex composed of TRAF2, TRAF3, BIRC2 and BIRC3. Interacts with BIRC2; the interaction promotes BIRC2 stability. Interaction with BIRC2 and/or BIRC3 is essential for ubiquitination of IKBKE, degradation of NFKBIA and activation of NF-kappa-B. Within complex I, phosphorylated TRAF2 interacts (via 'Lys-63'-linked polyubiquitin chains) with CHUCK/IKK-alpha, IKBKB/IKK-beta, IKBKG/IKK-gamma TAB2, TAB3 and TAK1 in response to TNF-alpha stimulation. Within complex I, interacts with UXT isoform 1 (via TPQE motif); the interaction prevents the recruitment of FADD and CASP8/caspase 8 to complex I. Forms a complex composed of TNFRSF8/CD30 or TNFRSF1B/TNFR2, and TRAF1, TRAF2 and E3 ligase TRAIP. Within the complex, interacts with TRAIP; the interaction inhibits TRAF2-mediated NF-kappa B activation. Component of a complex composed of TANK and TBK1. Interacts with TRPC4AP. Interacts with MAP3K1/MEKK1, MAP3K5/ASK1 and MAP3K11/MLK3 in response to TNF-alpha stimulation; the interaction leads to JNK activation and interaction with MAP3K5 is inhibited by PRMT1. Component of a complex composed of MAP3K14/NIK BIRC3 and TRAF3; the interaction leads to BIRC2/3-mediated ubiquitination of TRAF3 upon CD40 engagement in a TRAF2-dependent manner. Interacts with MAP3K14/NIK in response to TNF-alpha stimulation; the interaction leads to NF-kappa B activation. Interacts with PEG3; the interaction may promote TRAF2-mediated NF-kappa B activation. Interacts with HIVEP3; the interaction may inhibit TNF-alpha-TRAF2-mediated NF-kappa B and JNK activation. Interacts with TANK/ITRAF; the interaction prevents interaction between TNFRSF1B/TNFR2 and TRAF2. Interacts with deubiquitinating enzyme CYLD; the interaction results in the deubiquitination and inactivation of TRAF2. Interacts with SIAH2; the interaction leads to TRAF2 ubiquitination and degradation. Interacts with E2 conjugating enzyme UBE2N/Ubc13, E3 ligase ITCH and RNF11 in response to TNF-alpha stimulation. Interacts with ubiquitin-editing enzyme TNFAIP3/A20 in response to TNF-alpha stimulation; the interaction promotes TRAF2 dissociation from UBE2N/Ubc13, ITCH, RNF11 and TAX1BP1 and prevents prolonged TRAF-2 ubiquitination. Interacts with TAX1BP1 in response to TNF-alpha stimulation; the interaction promotes TRAF2 dissociation from UBE2N/Ubc13 and TNFAIP3/A20, and prevents prolonged TRAF-2 ubiquitination. Interacts (via C-terminus) with EIF2AK2/PKR (via the kinase catalytic domain). Interacts with deubiquitinating enzyme USP48. Interacts with PTPN2; probably involved in TNF-mediated signaling. Interacts with Toll-like receptor TLR4/3 adapter TICAM1/TRIF; the interaction may promote TICAM1 ubiquitination. Interacts with kinase/endoribonuclease ERN1/IRE1 and DAB2IP in response to ER stress; the interaction requires DAB2IP. Interacts with ERN1/IRE1 and TAOK3 in response to ER stress; the interaction may promote TRAF2 phosphorylation. Interacts (via zinc fingers) with DAB2IP (via C-terminus PER domain)in response to TNF-alpha stimulation. Interacts with CASP8AP2/FLASH. Interacts with NFATC2IP; the interaction may repress IL-4 production in T cells. Interacts with kinase CDK9. Interacts with sphingosine kinase 1 SPHK1. Interacts with kinase TNIK. Interacts with TRAFD1. Interacts with DNA phosphodiesterase TDP2. Interacts with MAVS/IPS1. Interacts with CARD14. Interacts with Epstein-Barr virus LMP1/BNFL1. Interacts with GPS2. Interacts with XPNPEP3. Interacts with RIPK3. Interacts with RELL2. Interacts with LRRC19. Interacts with GAPDH; promoting TRAF2 ubiquitination. In terms of processing, phosphorylated at several serine residues within the first 128 amino acid residues. Phosphorylated at Thr-117 in response to signaling via TNF and TNFRSF1A. Phosphorylation at Thr-117 is required for 'Lys-63'-linked polyubiquitination, but not for 'Lys-48'-linked polyubiquitination. Phosphorylation at Thr-117 is important for interaction with IKKA and IKKB, activation of IKK and subsequent activation of NF-kappa-B. Undergoes both 'Lys-48'-linked and 'Lys-63'-linked polyubiquitination. Polyubiquitinated via 'Lys-63'-linked ubiquitin in response to TNF signaling; this requires prior phosphorylation at Thr-117. 'Lys-63'-linked polyubiquitination promotes TRAF2-mediated activation of NF-kappa-B. Can be polyubiquitinated at several Lys residues via 'Lys-48'-linked ubiquitin chains in response to TNF signaling, leading to proteasomal degradation. Autoubiquitinated, leading to its subsequent proteasomal degradation. Polyubiquitinated by BIRC2 and SIAH2, leading to its subsequent proteasomal degradation. Deubiquitinated by CYLD, a protease that specifically cleaves 'Lys-63'-linked polyubiquitin chains. Ubiquination is inhibited by LRRC19; inhibits proteasomal degradation. Ubiquitinated at Lys-320 by the SCF(FBXL2) complex, leading to its degradation by the proteasome. Ubiquitinated by E3 ubiquitin-protein ligase complex containing FBXO7; leading to repression of NF-kappa-B signaling.

Its subcellular location is the cytoplasm. It catalyses the reaction S-ubiquitinyl-[E2 ubiquitin-conjugating enzyme]-L-cysteine + [acceptor protein]-L-lysine = [E2 ubiquitin-conjugating enzyme]-L-cysteine + N(6)-ubiquitinyl-[acceptor protein]-L-lysine.. It functions in the pathway protein modification; protein ubiquitination. Its activity is regulated as follows. Has very low E3 ubiquitin ligase activity in the absence of sphingosine-1-phosphate. E3 ubiquitin ligase activity is strongly activated by cytoplasmic sphingosine-1-phosphate. Its function is as follows. E3 ubiquitin-protein ligase that regulates activation of NF-kappa-B and JNK and plays a central role in the regulation of cell survival and apoptosis. Catalyzes 'Lys-63'-linked ubiquitination of target proteins, such as BIRC3, IKBKE, MLST8, RIPK1 and TICAM1. Is an essential constituent of several E3 ubiquitin-protein ligase complexes, where it promotes the ubiquitination of target proteins by bringing them into contact with other E3 ubiquitin ligases. Regulates BIRC2 and BIRC3 protein levels by inhibiting their autoubiquitination and subsequent degradation; this does not depend on the TRAF2 RING-type zinc finger domain. Plays a role in mediating activation of NF-kappa-B by EIF2AK2/PKR. In complex with BIRC2 or BIRC3, promotes ubiquitination of IKBKE. Acts as a regulator of mTORC1 and mTORC2 assembly by mediating 'Lys-63'-linked ubiquitination of MLST8, thereby inhibiting formation of the mTORC2 complex, while facilitating assembly of the mTORC1 complex. Required for normal antibody isotype switching from IgM to IgG. This chain is TNF receptor-associated factor 2, found in Homo sapiens (Human).